The primary structure comprises 225 residues: Perlwapin-like protein (225 aa).

An N-terminal signal peptide occupies residues 1-19 (MNHLWLFIVTVSCIYLVYG). 4 cysteine pairs are disulfide-bonded: C27/C57, C36/C61, C43/C56, and C49/C65. The 42-residue stretch at 27-68 (CKVKFMGTACPLGRLVCEEDGDCLGVNQVCCYDGCGTTCHNK) folds into the WAP 1; atypical domain. The N-linked (GlcNAc...) asparagine glycan is linked to N67. Residues 117 to 169 (IIPSPELLCPVVTVRYAFCRFSTYTPCHTSNDCAVPGMKCCPDVCGKRCKFPI) form the WAP 2 domain. 4 disulfides stabilise this stretch: C125/C157, C135/C161, C143/C156, and C149/C165. N-linked (GlcNAc...) asparagine glycosylation occurs at N170. The interval 176-225 (QFQQTPLKPTVPLPQYQQTPLQPTVPSSQPPLQPTVPSPQSYNYKGACST) is disordered. Residues 188–201 (LPQYQQTPLQPTVP) show a composition bias toward low complexity. Positions 203 to 212 (SQPPLQPTVP) are enriched in pro residues. A compositionally biased stretch (polar residues) spans 213–225 (SPQSYNYKGACST).

As to expression, component of the acid-soluble organic matrix of calcified layers of the shell (at protein level).

Its subcellular location is the secreted. This is Perlwapin-like protein from Lottia gigantea (Giant owl limpet).